A 3038-amino-acid chain; its full sequence is Lovastatin nonaketide synthase, polyketide synthase component (3038 aa).

Positions asparagine 8–glutamate 447 constitute a Ketosynthase family 3 (KS3) domain. Catalysis depends on for beta-ketoacyl synthase activity residues cysteine 181, histidine 320, and histidine 367. The interval isoleucine 562–arginine 889 is malonyl-CoA:ACP transacylase (MAT) domain. Residue serine 656 is the For malonyltransferase activity of the active site. The tract at residues alanine 695–lysine 757 is lovC-binding. The segment at histidine 953–valine 1089 is N-terminal hotdog fold. The interval histidine 953–proline 1263 is dehydratase (DH) domain. Residues histidine 953–serine 1267 form the PKS/mFAS DH domain. The active-site Proton acceptor; for dehydratase activity is histidine 985. The tract at residues glutamate 1107–serine 1267 is C-terminal hotdog fold. Aspartate 1174 functions as the Proton donor; for dehydratase activity in the catalytic mechanism. The segment at leucine 1443–glutamine 1543 is methyltransferase (CMet) domain. The ketoreductase (KR) domain stretch occupies residues threonine 2139 to alanine 2437. A Carrier domain is found at glutamine 2463–leucine 2538. Serine 2498 carries the O-(pantetheine 4'-phosphoryl)serine modification. The disordered stretch occupies residues valine 2546–proline 2602. Over residues serine 2583–glutamate 2594 the composition is skewed to acidic residues. The tract at residues proline 2602–phenylalanine 2952 is inactive Condensation domain.

As to quaternary structure, homodimer. Each MAT domain from the lovB homodimer binds one lovC molecule to form the final active lovB-lovC megasynthase complex. The cofactor is pantetheine 4'-phosphate.

The catalysed reaction is holo-[lovastatin nonaketide synthase] + 9 malonyl-CoA + S-adenosyl-L-methionine + 11 NADPH + 19 H(+) = dihydromonacolin L-[lovastatin nonaketide synthase] + S-adenosyl-L-homocysteine + 9 CO2 + 11 NADP(+) + 9 CoA + 6 H2O. It functions in the pathway polyketide biosynthesis; lovastatin biosynthesis. In terms of biological role, lovastatin nonaketide synthase; part of the gene cluster that mediates the biosynthesis of lovastatin (also known as mevinolin, mevacor or monacolin K), a hypolipidemic inhibitor of (3S)-hydroxymethylglutaryl-coenzyme A (HMG-CoA) reductase (HMGR). The first step in the biosynthesis of lovastatin is the production of dihydromonacolin L acid by the lovastatin nonaketide synthase lovB and the trans-acting enoyl reductase lovC (called the lovB-lovC megasynthase complex) via condensation of one acetyl-CoA unit and 8 malonyl-CoA units. The formation of the LovB/C complex is essential for the integrity of the catalytic chamber to the complete total synthesis of DML acid. Dihydromonacolin L acid is released from lovB by the thioesterase lovG. Next, dihydromonacolin L acid is oxidized by the dihydromonacolin L monooxygenase lovA twice to form monacolin J acid. The 2-methylbutyrate moiety of lovastatin is synthesized by the lovastatin diketide synthase lovF via condensation of one acetyl-CoA unit and one malonyl-CoA unit. Finally, the covalent attachment of this moiety to monacolin J acid is catalyzed by the transesterase lovD to yield lovastatin. LovD has broad substrate specificity and can also convert monacolin J to simvastatin using alpha-dimethylbutanoyl-S-methyl-3-mercaptopropionate (DMB-S-MMP) as the thioester acyl donor, and can also catalyze the reverse reaction and function as hydrolase in vitro. LovD has much higher activity with LovF-bound 2-methylbutanoate than with free diketide substrates. This Aspergillus terreus protein is Lovastatin nonaketide synthase, polyketide synthase component.